A 320-amino-acid chain; its full sequence is Cytochrome f (320 aa).

Positions 1-35 are cleaved as a signal peptide; sequence MQTRNTFSWIREEITRSISVLLMIYIITWASISSA. Tyrosine 36, cysteine 56, cysteine 59, and histidine 60 together coordinate heme. Residues 286-306 form a helical membrane-spanning segment; it reads VQGLLFFLGSVVLAQIFLVLK.

This sequence belongs to the cytochrome f family. The 4 large subunits of the cytochrome b6-f complex are cytochrome b6, subunit IV (17 kDa polypeptide, petD), cytochrome f and the Rieske protein, while the 4 small subunits are PetG, PetL, PetM and PetN. The complex functions as a dimer. The cofactor is heme.

The protein localises to the plastid. It localises to the chloroplast thylakoid membrane. Component of the cytochrome b6-f complex, which mediates electron transfer between photosystem II (PSII) and photosystem I (PSI), cyclic electron flow around PSI, and state transitions. This is Cytochrome f from Lobularia maritima (Sweet alyssum).